The sequence spans 814 residues: Protein kinase C-binding protein NELL2 (814 aa).

The signal sequence occupies residues 1–19; the sequence is MEFILGIFCVLFCLRAGAG. 3 N-linked (GlcNAc...) asparagine glycosylation sites follow: Asn-51, Asn-223, and Asn-296. The region spanning 53–226 is the Laminin G-like domain; sequence SKAFLFQDTS…SQCPDLNRTC (174 aa). The VWFC 1 domain maps to 270-329; that stretch reads RSCTVKGNIYRELESWMDGCKKCTCTNGTAQCETLTCSAPNCLSGFSPAYVPGKCCKECQ. The EGF-like 1 domain maps to 395 to 437; that stretch reads GHDFCSEGHNCMGYSICKNLDDKAVCICRDGFRALREDNAYCE. 3 disulfides stabilise this stretch: Cys-399–Cys-411, Cys-405–Cys-420, and Cys-422–Cys-436. Residues Asp-438, Ile-439, and Glu-441 each contribute to the Ca(2+) site. The 42-residue stretch at 438-479 folds into the EGF-like 2; calcium-binding domain; sequence DIDECTEGRHYCRENTVCVNTPGSFMCVCQTGYLKIDDYSCT. 9 disulfide bridges follow: Cys-442–Cys-455, Cys-449–Cys-464, Cys-466–Cys-478, Cys-484–Cys-497, Cys-491–Cys-506, Cys-508–Cys-519, Cys-523–Cys-533, Cys-527–Cys-539, and Cys-541–Cys-550. Ca(2+) is bound by residues Asn-457, Thr-458, and Ser-461. Residues 480 to 520 enclose the EGF-like 3; calcium-binding domain; sequence EHNECATNQHSCDENAMCFNTVGGHNCVCQPGYTGNGTDCR. A glycan (N-linked (GlcNAc...) asparagine) is linked at Asn-515. The region spanning 521–551 is the EGF-like 4 domain; sequence AFCKDGCRNGGTCIAPNICACPQGFTGPSCE. 3 residues coordinate Ca(2+): Asp-553, Ile-554, and Glu-556. One can recognise an EGF-like 5; calcium-binding domain in the interval 553–599; the sequence is DIDECTEGFVQCDSRANCINLPGWYHCECRDGYHDNGMFSLGGESCE. Disulfide bonds link Cys-557/Cys-570, Cys-564/Cys-579, and Cys-581/Cys-598. The Ca(2+) site is built by Asn-572, Leu-573, and Trp-576. Asp-600, Ile-601, and Glu-603 together coordinate Ca(2+). The region spanning 600–635 is the EGF-like 6; calcium-binding domain; the sequence is DIDECATGRHSCSNDTVCFNLDGGFDCRCPHGKNCS. 3 disulfide bridges follow: Cys-604–Cys-617, Cys-611–Cys-626, and Cys-628–Cys-634. Asn-613 is a glycosylation site (N-linked (GlcNAc...) asparagine). Residues Asn-619, Leu-620, and Gly-623 each coordinate Ca(2+). An N-linked (GlcNAc...) asparagine glycan is attached at Asn-633. 2 VWFC domains span residues 636–691 and 696–754; these read GDCT…PECD and SQCL…PRCV.

Homotrimer.

It localises to the secreted. Functionally, may regulate neuronal differentiation, polarization and axon guidance. The chain is Protein kinase C-binding protein NELL2 (nell2.L) from Xenopus laevis (African clawed frog).